The following is a 99-amino-acid chain: MSAVTLQQGDLLLNLYIQPKASRDQIVGLHGDELKVAITAPPIDGKANAHLSKYLAKTFKVPKSDIHIMKGELGRHKQIRVIDPKIIPSIITELMGQTS.

The protein belongs to the UPF0235 family.

The chain is UPF0235 protein Sbal_3028 from Shewanella baltica (strain OS155 / ATCC BAA-1091).